We begin with the raw amino-acid sequence, 179 residues long: Large ribosomal subunit protein uL5 (179 aa).

Belongs to the universal ribosomal protein uL5 family. As to quaternary structure, part of the 50S ribosomal subunit; part of the 5S rRNA/L5/L18/L25 subcomplex. Contacts the 5S rRNA and the P site tRNA. Forms a bridge to the 30S subunit in the 70S ribosome.

This is one of the proteins that bind and probably mediate the attachment of the 5S RNA into the large ribosomal subunit, where it forms part of the central protuberance. In the 70S ribosome it contacts protein S13 of the 30S subunit (bridge B1b), connecting the 2 subunits; this bridge is implicated in subunit movement. Contacts the P site tRNA; the 5S rRNA and some of its associated proteins might help stabilize positioning of ribosome-bound tRNAs. This chain is Large ribosomal subunit protein uL5, found in Yersinia pestis.